The following is a 610-amino-acid chain: Probable indole-3-acetic acid-amido synthetase GH3.1 (610 aa).

This sequence belongs to the IAA-amido conjugating enzyme family. Expressed in flowers.

May catalyze the synthesis of indole-3-acetic acid (IAA)-amino acid conjugates, providing a mechanism for the plant to cope with the presence of excess auxin. This chain is Probable indole-3-acetic acid-amido synthetase GH3.1 (GH3.1), found in Oryza sativa subsp. japonica (Rice).